The following is a 272-amino-acid chain: Phytolongin Phyl2.2 (272 aa).

One can recognise a Longin domain in the interval 12–116 (CIAKGTVVLA…LINPVSHCLQ (105 aa)). The helical; Anchor for type IV membrane protein transmembrane segment at 243–263 (WVVLMFDFCICAVLFGIWLWI) threads the bilayer.

This sequence belongs to the synaptobrevin family.

It localises to the membrane. Its function is as follows. Non-SNARE longin protein involved in membrane-trafficking machinery. The chain is Phytolongin Phyl2.2 from Arabidopsis thaliana (Mouse-ear cress).